A 310-amino-acid chain; its full sequence is Isoaspartyl peptidase/L-asparaginase (310 aa).

The Nucleophile role is filled by T167. Residues 195-198 (RVGD) and 218-221 (TGHG) contribute to the substrate site.

Belongs to the Ntn-hydrolase family. Heterodimer of an alpha and beta chain produced by autocleavage. Post-translationally, cleaved into an alpha and beta chain by autocatalysis; this activates the enzyme. The N-terminal residue of the beta subunit is responsible for the nucleophile hydrolase activity.

The protein localises to the cytoplasm. The catalysed reaction is L-asparagine + H2O = L-aspartate + NH4(+). It carries out the reaction Cleavage of a beta-linked Asp residue from the N-terminus of a polypeptide.. Its function is as follows. Has both L-asparaginase and beta-aspartyl peptidase activity. Does not have aspartylglucosaminidase activity and is inactive toward GlcNAc-L-Asn. Likewise, has no activity toward glutamine. This is Isoaspartyl peptidase/L-asparaginase (asrgl1) from Danio rerio (Zebrafish).